The primary structure comprises 440 residues: Trigger factor (440 aa).

The region spanning 163-248 is the PPIase FKBP-type domain; that stretch reads GDTVNIDFDG…INEIKYKNVP (86 aa).

The protein belongs to the FKBP-type PPIase family. Tig subfamily.

The protein resides in the cytoplasm. The enzyme catalyses [protein]-peptidylproline (omega=180) = [protein]-peptidylproline (omega=0). Functionally, involved in protein export. Acts as a chaperone by maintaining the newly synthesized protein in an open conformation. Functions as a peptidyl-prolyl cis-trans isomerase. This Staphylococcus carnosus (strain TM300) protein is Trigger factor.